We begin with the raw amino-acid sequence, 160 residues long: SsrA-binding protein (160 aa).

The protein belongs to the SmpB family.

Its subcellular location is the cytoplasm. Required for rescue of stalled ribosomes mediated by trans-translation. Binds to transfer-messenger RNA (tmRNA), required for stable association of tmRNA with ribosomes. tmRNA and SmpB together mimic tRNA shape, replacing the anticodon stem-loop with SmpB. tmRNA is encoded by the ssrA gene; the 2 termini fold to resemble tRNA(Ala) and it encodes a 'tag peptide', a short internal open reading frame. During trans-translation Ala-aminoacylated tmRNA acts like a tRNA, entering the A-site of stalled ribosomes, displacing the stalled mRNA. The ribosome then switches to translate the ORF on the tmRNA; the nascent peptide is terminated with the 'tag peptide' encoded by the tmRNA and targeted for degradation. The ribosome is freed to recommence translation, which seems to be the essential function of trans-translation. This Erwinia tasmaniensis (strain DSM 17950 / CFBP 7177 / CIP 109463 / NCPPB 4357 / Et1/99) protein is SsrA-binding protein.